The following is a 354-amino-acid chain: Peptide chain release factor 1 (354 aa).

Glutamine 232 carries the post-translational modification N5-methylglutamine.

Belongs to the prokaryotic/mitochondrial release factor family. Methylated by PrmC. Methylation increases the termination efficiency of RF1.

It is found in the cytoplasm. In terms of biological role, peptide chain release factor 1 directs the termination of translation in response to the peptide chain termination codons UAG and UAA. The sequence is that of Peptide chain release factor 1 from Jannaschia sp. (strain CCS1).